The following is a 724-amino-acid chain: WD repeat-containing protein 91 (724 aa).

Residues 178-207 are a coiled coil; that stretch reads FDSEVQRITSLQEDNEQLRQTVFALQGESR. The tract at residues 249 to 365 is disordered; sequence SRNFFSTFLP…PDQTDSANQT (117 aa). Polar residues-rich tracts occupy residues 270–279 and 303–315; these read GPQSSPTQSA and SVSS…STSH. Residue Ser-274 is modified to Phosphoserine. Basic and acidic residues predominate over residues 322–333; that stretch reads QDHEKERKELFS. Polar residues predominate over residues 349–365; that stretch reads DTQTEAPPDQTDSANQT. WD repeat units lie at residues 389–428, 431–471, 499–532, 537–576, 579–618, 641–679, and 686–724; these read EHHS…QTKA, MSKS…CLYE, AHSG…QQLQ, PGPV…SALS, AHDG…VKQS, VQVP…AGLE, and GHKA…AQKP.

This sequence belongs to the WD repeat WDR91 family.

Its subcellular location is the early endosome membrane. It is found in the late endosome membrane. Functions as a negative regulator of the PI3 kinase/PI3K activity associated with endosomal membranes. By modifying the phosphatidylinositol 3-phosphate/PtdInsP3 content of endosomal membranes may regulate endosome fusion, recycling, sorting and early to late endosome transport. The sequence is that of WD repeat-containing protein 91 (wdr91) from Danio rerio (Zebrafish).